The chain runs to 527 residues: Cytochrome P450 monooxyhenase eriA (527 aa).

Residues 17 to 37 traverse the membrane as a helical segment; it reads LGVVDLSLLGVGAVIAFAWLF. N-linked (GlcNAc...) asparagine glycosylation is found at N77, N274, and N297. C453 contributes to the heme binding site.

The protein belongs to the cytochrome P450 family. Heme serves as cofactor.

The protein resides in the membrane. The enzyme catalyses cyathadiol + reduced [NADPH--hemoprotein reductase] + O2 = cyathatriol + oxidized [NADPH--hemoprotein reductase] + H2O + H(+). Its pathway is secondary metabolite biosynthesis. Functionally, cytochrome P450 monooxygenase; part of the gene cluster that mediates the biosynthesis of erinacines, cyathane-xylosides that show unique biological activities, including leishmanicidal activity, stimulating activity for nerve growth-factor synthesis, and agonistic activity toward the kappa opioid receptor. Within the pathway, eriA catalyzes C-11 hydroxylation in the presence of the short chain dehydrogenase/reductase (SDR) eriH, which leads to the production of cyathatriol. The first step of the erinacines biosynthesis pathway is catalyzed by the geranylgeranyl diphosphate (GGPP) synthase eriE via conversion of farnesyl pyrophosphate and isopentyl pyrophosphate into geranylgeranyl pyrophosphate (GGPP). GGPP is then substrate of the diterpene cyclase eriG for the production of cyatha-3,12-diene. The cytochrome P450 monooxygenase eriI then hydroxylates cyatha-3,12-diene at C-14 of the seven-membered ring to produce erinacol, which is further hydroxylated at C-15 by the cytochrome P450 monooxygenase eriC to yield cyathadiol. The cytochrome P450 monooxygenase eriA then catalyzes C-11 hydroxylation in the presence of the short chain dehydrogenase/reductase (SDR) eriH, which leads to the production of cyathatriol. The acetyltransferase eriL converts cyathatriol into 11-O-acetyl-cyathatriol. The SDR eriH catalyzes further oxidation of 11-O-acetyl-cyathatriol into 1-O-acetylcyathin A3. Finally, the glycosyl transferase eriJ tranfers xylose from UDP-xylose onto C-14 of 11-O-acetyl-cyathatriol to form eracine Q. EriJ is also able to convert 11-O-acetyl-cyathatriol to eracine Q2 by using UDP-D-glucose as cosubstrate, but at a lower rate. This is Cytochrome P450 monooxyhenase eriA from Hericium erinaceus (Lion's mane mushroom).